Consider the following 1382-residue polypeptide: MPEEEFEWNESKLNALSEILTQWAPHDELKLENVILEAKMAWIHESTDAVALEKEFEKLLNTSFDPLMDYEEHQRVKNGVCSPAKSTKLDWITKWANIAEKLSISHINCSKAPHKTINFQRLQILPNMTSILAIAHTEADNVILIYGHTKEGIDFQTVLRHSYSNIPDGSLQTIHFLTKNLLDLYSQLFSRKITAEFKTRHFRCLPSFWLQYDVLAPIFEQFRAPRAPRIPLDEATSNWANRKWENYQYLTYLNDITGRVRGEVHNHPIFPWVCDFSEENGGFRQLNRTKYRLCKGDDQLREMYSREPSHHVPELLSDIGYMVYRARVEPKDNLCRHVRRKWVPEEYPSTMSRMYQWTPDECIPEFYDDPSIFNSCHPDMADLRFPEFVSSPQEFIEWHRKMLEHEEVSMNLHRWIDLVFGFNLAIDNSKNALNLHLCFVEKNRRGLRTTGMVQLFNRPHPIRMPLNYDPKLDNYHLKMESFGFGMTSEHRKEPEVEPDEDSHYQIYQKIKKVRRLRHNTYFSSMVSAMEVMAQIVLAPHLAGRFDDPDHIRRCIQLYSYRIPANYRRLFDFLFNTEQDFPDCDEFSFFVSVRLNIPTKILNFSEEFGKCVSLHILRKLDVIPPFSKRSQLIILKEVESLKKSIRLCDHMEQCVVAAFQQLLEDEEACIQSVHRLMPVITRSLSQSALEDLINPMIELIQCETSVKLLDRRFLMHVSICYGTHTFLDLFLPPIVEACASMNCDRSVVAKESIMWLAKRYGPVICAKFISSNVLRIMASCYEAFEMVGLEQQPKAVFNVVLQGDETCSRIESLLSEIVLTYSVTFITVQFLPFCVDLIEQFHKRSSVQLEPGLVSVFRIVELSIRSMSDHQLMNYLEEFIIQKVIYRVLTILLDASFQFSSMRVRIIIICKVCQLLHSITQKIGTENTRIYANQPFKLMFSTFSEIYETDEELRINLRKRPSENTLFEVPLWMVEDVVDKFAKEWGVPFLSSFCDDPAFLIPFVSNSSSSSSPPASIAHSPPSAFTAYSLGGMSSGNRLFSLSASSPVNSVNSLGGLSFCDSGSLSAVWCARVSAAVCGVDNYRFDHLSLCNYTGHQEKIRKLAAISNENSFVSASSDKTVKLWSIKPELDEIGCQWTYQKHTRPVHDITILADNSIASTDGVLHVWDPFRTTLLAQMEWDSKEGSGGNIMRVENVDRHILSAICSLHSTVKLFDSRVGGWTCELKVSPGPGLTRAITVRDKGNKMAVALSNGTLAILDARNGKINALAQTNSTHTVSVNWLSDTRLLVCDADECGIFLETNPRAHIVRKLQDPVSAACLTDNSLVTLQNGTILRVYRNSGELQIETKIRPDELPGTPTAVLPLPLNCSYLIGSSHGAIRLMC.

The 235-residue stretch at 229-463 folds into the BEACH domain; it reads RIPLDEATSN…QLFNRPHPIR (235 aa). WD repeat units lie at residues 1094 to 1133 and 1140 to 1176; these read GHQE…DEIG and KHTR…LLAQ.

It belongs to the WD repeat WDR81 family. As to quaternary structure, interacts with sorf-1; the interaction is direct. Interacts with bec-1.

It localises to the early endosome. The protein localises to the late endosome. The protein resides in the cytoplasm. In terms of biological role, together with sorf-1 negatively regulates the levels of phosphatidylinositol 3-phosphate (PtdIns3P) to enable the conversion of early endosomes to late endosomes. Binds to sorf-1 and the sorf-1-sorf-2 complex likely acts through bec-1, a non-catalytic subunit of phosphatidylinositol 3-kinase (PI3K), to suppress PI3K activity, thereby negatively regulating endosomal PtdIns3P levels. The chain is Suppressor of organelle fusion 2 from Caenorhabditis elegans.